Consider the following 652-residue polypeptide: DNA ligase (652 aa).

Residues Asp29–Asp33, Ser78–Leu79, and Glu107 each bind NAD(+). The active-site N6-AMP-lysine intermediate is the Lys109. Arg130, Glu164, Lys278, and Lys302 together coordinate NAD(+). The Zn(2+) site is built by Cys395, Cys398, Cys413, and Cys418. The region spanning Asn577–Leu652 is the BRCT domain.

The protein belongs to the NAD-dependent DNA ligase family. LigA subfamily. The cofactor is Mg(2+). Mn(2+) is required as a cofactor.

It catalyses the reaction NAD(+) + (deoxyribonucleotide)n-3'-hydroxyl + 5'-phospho-(deoxyribonucleotide)m = (deoxyribonucleotide)n+m + AMP + beta-nicotinamide D-nucleotide.. DNA ligase that catalyzes the formation of phosphodiester linkages between 5'-phosphoryl and 3'-hydroxyl groups in double-stranded DNA using NAD as a coenzyme and as the energy source for the reaction. It is essential for DNA replication and repair of damaged DNA. This Streptococcus pyogenes serotype M4 (strain MGAS10750) protein is DNA ligase.